The sequence spans 38 residues: Cytochrome b6-f complex subunit 5 (38 aa).

A helical transmembrane segment spans residues 5-25 (LLCGIVLGLIPVTLLGLFVAA).

Belongs to the PetG family. As to quaternary structure, the 4 large subunits of the cytochrome b6-f complex are cytochrome b6, subunit IV (17 kDa polypeptide, PetD), cytochrome f and the Rieske protein, while the 4 small subunits are PetG, PetL, PetM and PetN. The complex functions as a dimer.

Its subcellular location is the cellular thylakoid membrane. Its function is as follows. Component of the cytochrome b6-f complex, which mediates electron transfer between photosystem II (PSII) and photosystem I (PSI), cyclic electron flow around PSI, and state transitions. PetG is required for either the stability or assembly of the cytochrome b6-f complex. The sequence is that of Cytochrome b6-f complex subunit 5 from Parasynechococcus marenigrum (strain WH8102).